Reading from the N-terminus, the 1325-residue chain is Zinc finger MYM-type protein 6 (1325 aa).

8 MYM-type zinc fingers span residues 113 to 151, 163 to 206, 213 to 248, 296 to 334, 342 to 443, 451 to 485, 492 to 531, and 538 to 572; these read QLFC…PKDV, KDFC…RFEV, HGLC…SSGP, ELFC…QYHL, YSFC…KPEL, FLFC…KETV, KPFC…LVEN, and EEFC…SESI. Ser397 carries the post-translational modification Phosphoserine. Residues 665 to 733 form a disordered region; it reads ESTQEDAMKF…NDAELDSPPS (69 aa). Over residues 695-706 the composition is skewed to polar residues; sequence PVTQTKATSCKP.

Expressed at high levels in heart, skeletal muscle, kidney and liver.

It localises to the nucleus. Plays a role in the regulation of cell morphology and cytoskeletal organization. This chain is Zinc finger MYM-type protein 6 (ZMYM6), found in Homo sapiens (Human).